A 2346-amino-acid polypeptide reads, in one-letter code: Nucleoprotein TPR (2346 aa).

Coiled coils occupy residues 38–190 (DEYC…HKEI), 217–366 (QLQS…NLES), 395–493 (YAKS…SRQV), and 565–596 (KMLLEQSKNHIRKLDARFAELEDLLTQKNNTV). The segment at 622–649 (VDLDDSNLEPNDSALDTSEQPAANFEES) is disordered. Residues 629–642 (LEPNDSALDTSEQP) are compositionally biased toward polar residues. Coiled-coil stretches lie at residues 643–1158 (AANF…IEAL) and 1196–1247 (EEGR…DELN). Residues 1187–1655 (LNASGLTAAE…SPRTANVKPM (469 aa)) are interacts with Mad1. Residues threonine 1259, threonine 1302, threonine 1338, and threonine 1390 each carry the phosphothreonine modification. Coiled coils occupy residues 1281 to 1536 (TDSN…KRTE) and 1579 to 1627 (SYDE…GSQQ). 2 stretches are compositionally biased toward polar residues: residues 1621-1649 (RQLGSQQSTKPSTSSVAEKGNISESSPRT) and 1657-1667 (GSATVQQSATV). Disordered stretches follow at residues 1621-1677 (RQLG…ETPL), 1695-1768 (PTSQ…YMPS), and 1821-2346 (SPRV…GRFP). Residues 1702 to 1722 (AGSSTSTSSSSSSSSTSTTSA) show a composition bias toward low complexity. The segment covering 1738-1747 (PQQQVHTTGS) has biased composition (polar residues). Low complexity-rich tracts occupy residues 1752 to 1761 (SMASSSPTSS) and 1827 to 1878 (SSSS…PSSS). Over residues 1879–1891 (NVTTTQAGCSSQG) the composition is skewed to polar residues. The segment covering 1953–2023 (QEDDIQVVDS…QDNNEVDIEV (71 aa)) has biased composition (acidic residues). The span at 2028 to 2080 (MQAQEESQSLDNQAIATASASTQENNQSQAITSGSGESSNPVTLPQAEASNWK) shows a compositional bias: polar residues. Residues 2082 to 2091 (AAASTSTAAA) show a composition bias toward low complexity. Composition is skewed to polar residues over residues 2097–2110 (SVEIVSSPQVSNFC) and 2142–2159 (GAASASSPQKQSEAGESS). The span at 2165–2184 (KAADDGGDHADGTDNAREAD) shows a compositional bias: basic and acidic residues. Composition is skewed to polar residues over residues 2193-2223 (ATGQGEDSQPLGNDNPNVGTSQSEVSHNQAN) and 2302-2322 (RDTSPGNIQQNQMSANNNRFA). Basic residues predominate over residues 2323–2332 (QRTRNRRPIR).

The protein belongs to the TPR family. In terms of assembly, part of the nuclear pore complex (NPC). Associates with male-specific lethal (MSL) histone acetyltransferase complex. Interacts with Mad2; the interaction is required for efficient recruitment of Mad2 to unattached kinetochore and occurs in a microtubule-independent manner. Interacts with Mad1 (N-terminus). Interacts with Chro, east and Asator; the interaction is part of a macromolecular complex forming the spindle matrix during mitosis. Interacts with Nup98. In males, interacts with histone acetyltransferase mof. In terms of processing, mps1-mediated phosphorylation disrupts interaction with Mad1 during mitosis. Expressed in salivary glands, fat body, tracheal tube, esophageal tube and anterior ejaculatory duct (at protein level).

The protein resides in the nucleus. It localises to the nucleus matrix. It is found in the nucleus lamina. Its subcellular location is the nucleus envelope. The protein localises to the nucleus membrane. The protein resides in the nuclear pore complex. It localises to the cytoplasm. It is found in the cytoskeleton. Its subcellular location is the spindle. The protein localises to the chromosome. The protein resides in the centromere. It localises to the kinetochore. It is found in the midbody. Functionally, component of the nuclear pore complex (NPC), a complex required for the trafficking across the nuclear envelope. Functions as a scaffolding element in the nuclear phase of the NPC. Plays a role in chromosomal organization and gene expression regulation; stimulates transcription by promoting the formation of an open chromatin environment. Binds chromatin to nucleoporin-associated regions (NARs) that define transcriptionally active regions of the genome. Associates with extended chromosomal regions that alternate between domains of high density binding with those of low occupancy. Preferentially binds to NARs of the male X chromosome. In males, together with Nup153, required for the localization of the male-specific lethal (MSL) histone acetyltransferase complex to the X chromosome and therefore for the transcription of dosage compensation genes. In males, restrains dosage-compensated expression at the level of nascent transcription probably by interacting with the MSL complex and by modulating RNA Polymerase II phosphorylation status and activity. During mitosis forms a gel-like spindle matrix complex together with Skeletor (Skel), Chro, east, and Asator embedding the microtubule spindle apparatus. During interphase localizes Mad1 to the nuclear pore complex and thereby might act as a scaffold to assemble the Mad1-C-Mad2 complex, a heterotetramer that catalyzes the structural conversion of open-Mad2 (O-Mad2) into closed-Mad2 (C-Mad2) which is essential for spindle-assembly checkpoint (SAC). During the metaphase-anaphase transition and before chromosome congression, is phosphorylated by Msp-1; this modification releases Mad1 from the nuclear pore complex and thereby promotes assembly of SAC ensuring a timely and effective recruitment of spindle checkpoint proteins like Mad1, Mad2 and Mps1 to unattached kinetochores (KT). In testes, has a role in stem cell asymmetric division and maintenance via regulation of mitotic spindle assembly checkpoint (SAC) complex. The sequence is that of Nucleoprotein TPR from Drosophila melanogaster (Fruit fly).